We begin with the raw amino-acid sequence, 392 residues long: p21-activated protein kinase-interacting protein 1 (392 aa).

6 WD repeats span residues 33–72 (VADF…MKKK), 73–113 (IEHG…AKKW), 114–155 (ECLK…LVEG), 156–195 (RSAF…LDTA), 196–235 (SISG…CDSL), and 236–275 (VCLC…KMWK). The disordered stretch occupies residues 312–392 (SLPPAAEPSP…RKKKKIKTMQ (81 aa)). The residue at position 320 (Ser320) is a Phosphoserine. The segment covering 325–345 (EQSKIGKKEPGDTVHKEEKRS) has biased composition (basic and acidic residues). Positions 381–392 (KKRKKKKIKTMQ) are enriched in basic residues.

In terms of assembly, interacts with PAK1. In terms of tissue distribution, expressed in brain, colon, heart, kidney, liver, lung, muscle, peripheral blood leukocytes, placenta, small intestine, spleen and thymus.

It is found in the nucleus. Its subcellular location is the nucleolus. Functionally, negatively regulates the PAK1 kinase. PAK1 is a member of the PAK kinase family, which has been shown to play a positive role in the regulation of signaling pathways involving MAPK8 and RELA. PAK1 exists as an inactive homodimer, which is activated by binding of small GTPases such as CDC42 to an N-terminal regulatory domain. PAK1IP1 also binds to the N-terminus of PAK1, and inhibits the specific activation of PAK1 by CDC42. May be involved in ribosomal large subunit assembly. The polypeptide is p21-activated protein kinase-interacting protein 1 (PAK1IP1) (Homo sapiens (Human)).